A 166-amino-acid polypeptide reads, in one-letter code: Large ribosomal subunit protein uL10 (166 aa).

This sequence belongs to the universal ribosomal protein uL10 family. As to quaternary structure, part of the ribosomal stalk of the 50S ribosomal subunit. The N-terminus interacts with L11 and the large rRNA to form the base of the stalk. The C-terminus forms an elongated spine to which L12 dimers bind in a sequential fashion forming a multimeric L10(L12)X complex.

In terms of biological role, forms part of the ribosomal stalk, playing a central role in the interaction of the ribosome with GTP-bound translation factors. The sequence is that of Large ribosomal subunit protein uL10 from Lysinibacillus sphaericus (strain C3-41).